The following is a 205-amino-acid chain: Probable GTP-binding protein EngB (205 aa).

The 175-residue stretch at 29–203 (QGAEIAFIGR…KAVLSQWFRS (175 aa)) folds into the EngB-type G domain. GTP-binding positions include 37-44 (GRSNAGKS), 64-68 (GRTQM), 82-85 (DLPG), 149-152 (TKSD), and 182-184 (FSS). Residues S44 and T66 each coordinate Mg(2+).

This sequence belongs to the TRAFAC class TrmE-Era-EngA-EngB-Septin-like GTPase superfamily. EngB GTPase family. Requires Mg(2+) as cofactor.

Functionally, necessary for normal cell division and for the maintenance of normal septation. The chain is Probable GTP-binding protein EngB from Coxiella burnetii (strain RSA 493 / Nine Mile phase I).